Consider the following 351-residue polypeptide: MALWYLFNKRSLGAAVLILVGLLMCNIQITGAQSNIGVCYGEIANNLPSEQDVINLYKANGIRKMRIYYPDTNIFKALNGSNIEIILEVPNQDLEALANSSIANGWVQDNIRSHFPYVKFKYISIGNEVSPTNNGQYSQFLLHAMKNVYNALAAAGLQDKIKVSTATYSGLLANTYPPKDSIFREELKSFINPIIEFLARNNLPLLANIYPYFGHIYNTVDVPLSYALFNQQETNSTGYQNLFDALLDSIYFAVEKAGGPNVEIIVSESGWPSEGNSAATIENAQTYYRNLVNHVKGGAGTPKKPGRIIETYLFAMFDENEKQGEITEKHFGLFYPNRAAKYQLNFMYSDS.

Residues 1 to 32 (MALWYLFNKRSLGAAVLILVGLLMCNIQITGA) form the signal peptide. The residue at position 33 (Q33) is a Pyrrolidone carboxylic acid. N79 and N99 each carry an N-linked (GlcNAc...) asparagine glycan. Catalysis depends on E128, which acts as the Proton donor. Residue N235 is glycosylated (N-linked (GlcNAc...) asparagine). E268 acts as the Nucleophile in catalysis.

This sequence belongs to the glycosyl hydrolase 17 family. Post-translationally, glycosylated. The N-terminus is blocked.

Its subcellular location is the secreted. It localises to the extracellular space. The protein resides in the extracellular matrix. The enzyme catalyses Hydrolysis of (1-&gt;3)-beta-D-glucosidic linkages in (1-&gt;3)-beta-D-glucans.. Functionally, implicated in the defense of plants against pathogens. This is Glucan endo-1,3-beta-glucosidase (SP41B) from Nicotiana tabacum (Common tobacco).